The chain runs to 271 residues: Putative phosphoenolpyruvate synthase regulatory protein (271 aa).

An ADP-binding site is contributed by glycine 151–threonine 158.

The protein belongs to the pyruvate, phosphate/water dikinase regulatory protein family. PSRP subfamily.

It carries out the reaction [pyruvate, water dikinase] + ADP = [pyruvate, water dikinase]-phosphate + AMP + H(+). The catalysed reaction is [pyruvate, water dikinase]-phosphate + phosphate + H(+) = [pyruvate, water dikinase] + diphosphate. In terms of biological role, bifunctional serine/threonine kinase and phosphorylase involved in the regulation of the phosphoenolpyruvate synthase (PEPS) by catalyzing its phosphorylation/dephosphorylation. The protein is Putative phosphoenolpyruvate synthase regulatory protein of Paraburkholderia phytofirmans (strain DSM 17436 / LMG 22146 / PsJN) (Burkholderia phytofirmans).